The chain runs to 220 residues: Deoxyribose-phosphate aldolase (220 aa).

Asp-92 serves as the catalytic Proton donor/acceptor. The active-site Schiff-base intermediate with acetaldehyde is Lys-155. Lys-184 (proton donor/acceptor) is an active-site residue.

Belongs to the DeoC/FbaB aldolase family. DeoC type 1 subfamily.

The protein resides in the cytoplasm. The enzyme catalyses 2-deoxy-D-ribose 5-phosphate = D-glyceraldehyde 3-phosphate + acetaldehyde. It functions in the pathway carbohydrate degradation; 2-deoxy-D-ribose 1-phosphate degradation; D-glyceraldehyde 3-phosphate and acetaldehyde from 2-deoxy-alpha-D-ribose 1-phosphate: step 2/2. In terms of biological role, catalyzes a reversible aldol reaction between acetaldehyde and D-glyceraldehyde 3-phosphate to generate 2-deoxy-D-ribose 5-phosphate. In Natranaerobius thermophilus (strain ATCC BAA-1301 / DSM 18059 / JW/NM-WN-LF), this protein is Deoxyribose-phosphate aldolase.